Consider the following 297-residue polypeptide: Formylmethanofuran--tetrahydromethanopterin formyltransferase (297 aa).

This sequence belongs to the FTR family. In terms of assembly, homotetramer.

It is found in the cytoplasm. The enzyme catalyses N-formylmethanofuran + 5,6,7,8-tetrahydromethanopterin + H(+) = N(5)-formyl-5,6,7,8-tetrahydromethanopterin + methanofuran. The protein operates within one-carbon metabolism; methanogenesis from CO(2); 5,10-methenyl-5,6,7,8-tetrahydromethanopterin from CO(2): step 2/3. Catalyzes the reversible transfer of a formyl group from formylmethanofuran (formyl-MFR) to tetrahydromethanopterin (H(4)MPT) to produce 5-formyl tetrahydromethanopterin (5-formyl-H(4)MPT) and methanofuran (MFR). The chain is Formylmethanofuran--tetrahydromethanopterin formyltransferase from Methanosarcina mazei (strain ATCC BAA-159 / DSM 3647 / Goe1 / Go1 / JCM 11833 / OCM 88) (Methanosarcina frisia).